The primary structure comprises 342 residues: S-adenosylmethionine:tRNA ribosyltransferase-isomerase (342 aa).

This sequence belongs to the QueA family. As to quaternary structure, monomer.

It is found in the cytoplasm. It catalyses the reaction 7-aminomethyl-7-carbaguanosine(34) in tRNA + S-adenosyl-L-methionine = epoxyqueuosine(34) in tRNA + adenine + L-methionine + 2 H(+). Its pathway is tRNA modification; tRNA-queuosine biosynthesis. In terms of biological role, transfers and isomerizes the ribose moiety from AdoMet to the 7-aminomethyl group of 7-deazaguanine (preQ1-tRNA) to give epoxyqueuosine (oQ-tRNA). This Streptococcus pneumoniae serotype 4 (strain ATCC BAA-334 / TIGR4) protein is S-adenosylmethionine:tRNA ribosyltransferase-isomerase.